The primary structure comprises 344 residues: MGEAIVTDVVIVGAGPAGLFAVFELGLLDIKSHLIDILAKPGGQCAELYPEKPIYDIPGYPRVNGQELVDNLLAQIEPFHPTFHFGEMVERLEVLGTPEAPSFRVHTSGGEIFESKVVIVAAGGGSFQPKKPPIEGIEAFERKSVFYAVRKMEDFRDKHVVIVGGGDSALDWTLNLHPIAKRITLVHRRDDFRAAPHSVNSMRELVAAGHMDLRLGQIVSLRGEAGELSAVVLKGSDGEAEIACERLVPFFGLTMKLGPIADWGLNLHENLIPVDTEKFETNVSGIFAIGDINTYPGKLKLILSGFHEGALAAQKVHRYVYPDKRLSFQYTTSSSSLQKKLGVN.

7 residues coordinate FAD: D36, Q44, Y49, V89, F127, D291, and T332.

This sequence belongs to the ferredoxin--NADP reductase type 2 family. Homodimer. The cofactor is FAD.

It carries out the reaction 2 reduced [2Fe-2S]-[ferredoxin] + NADP(+) + H(+) = 2 oxidized [2Fe-2S]-[ferredoxin] + NADPH. This chain is Ferredoxin--NADP reductase, found in Beijerinckia indica subsp. indica (strain ATCC 9039 / DSM 1715 / NCIMB 8712).